We begin with the raw amino-acid sequence, 83 residues long: Antitoxin ParD1 (83 aa).

Residues 33 to 60 (IRSALRLLEDRETQLRALREALEAGERS) adopt a coiled-coil conformation. A disordered region spans residues 54–83 (LEAGERSGSSTPFDFDGFLGRKRADASRGR).

This sequence belongs to the ParD antitoxin family.

Its function is as follows. Antitoxin component of a type II toxin-antitoxin (TA) system. The chain is Antitoxin ParD1 (parD1) from Mycobacterium tuberculosis (strain CDC 1551 / Oshkosh).